Here is a 422-residue protein sequence, read N- to C-terminus: uncharacterized protein (422 aa).

This sequence belongs to the asfivirus K421R family.

The protein localises to the virion. This is an uncharacterized protein from Ornithodoros (relapsing fever ticks).